A 236-amino-acid chain; its full sequence is MTRRYWNINLEEMMEAGVHFGHGTRKWDPRMAPYISAKRKGIHITNLTRTARFLSEACDLVFDAASRGKHFLIVGTKDKAADSVASAAIRARCHYVNKKWLGGMSTNWSTTETRLQKFRDLRVRAEMGQFSRLPKRDAAILKRQLSHFQTYLGGIKYMTGLPDIVIIIDQQEEYTALRECVTLGIPTICLIDTNCDPDLADIPIPANDDAIASIRLILNKLVSAICQGRSSYIRSR.

It belongs to the universal ribosomal protein uS2 family.

It is found in the plastid. Its subcellular location is the chloroplast. The protein is Small ribosomal subunit protein uS2c (rps2) of Nymphaea alba (White water-lily).